The primary structure comprises 497 residues: Maintenance of mitochondrial morphology protein 1 (497 aa).

The Lumenal portion of the chain corresponds to 1 to 28; the sequence is MSSVLNPSSPHSWDLCCSSSSNRSYHRP. The helical transmembrane segment at 29 to 55 threads the bilayer; it reads THPIVGLLVGQLSVVLLIGAFIKFFIF. The Cytoplasmic segment spans residues 56 to 497; that stretch reads GEAPPSPSRS…GSLPDAVPIT (442 aa). Disordered stretches follow at residues 60 to 107, 284 to 330, 402 to 421, and 437 to 497; these read PSPS…SSST, ESST…STTG, TGVR…AAGV, and EMLH…VPIT. Residues 66–77 are compositionally biased toward basic residues; it reads QTHRTSQHKRSY. Residues 81 to 94 are compositionally biased toward basic and acidic residues; sequence GARDLSPRTLKEKP. 3 stretches are compositionally biased toward polar residues: residues 95–107, 284–302, and 311–330; these read SSNV…SSST, ESST…NLRS, and PQES…STTG. In terms of domain architecture, SMP-LTD spans 140-393; the sequence is QPESLDWFNV…EPRVQVVALP (254 aa). Residues 412–421 show a composition bias toward low complexity; that stretch reads DVSSSDAAGV. Over residues 440 to 451 the composition is skewed to basic and acidic residues; that stretch reads HAAREVDAEGLR. Positions 462 to 473 are enriched in polar residues; sequence GSSSKYAQQNQS. A compositionally biased stretch (basic and acidic residues) spans 474–484; that stretch reads SRERGRADDPF.

It belongs to the MMM1 family. As to quaternary structure, homodimer. Component of the ER-mitochondria encounter structure (ERMES) or MDM complex, composed of MMM1, MDM10, MDM12 and MDM34. An MMM1 homodimer associates with one molecule of MDM12 on each side in a pairwise head-to-tail manner, and the SMP-LTD domains of MMM1 and MDM12 generate a continuous hydrophobic tunnel for phospholipid trafficking.

The protein localises to the endoplasmic reticulum membrane. In terms of biological role, component of the ERMES/MDM complex, which serves as a molecular tether to connect the endoplasmic reticulum (ER) and mitochondria. Components of this complex are involved in the control of mitochondrial shape and protein biogenesis, and function in nonvesicular lipid trafficking between the ER and mitochondria. The MDM12-MMM1 subcomplex functions in the major beta-barrel assembly pathway that is responsible for biogenesis of all outer membrane beta-barrel proteins, and acts in a late step after the SAM complex. The MDM10-MDM12-MMM1 subcomplex further acts in the TOM40-specific pathway after the action of the MDM12-MMM1 complex. Essential for establishing and maintaining the structure of mitochondria and maintenance of mtDNA nucleoids. The protein is Maintenance of mitochondrial morphology protein 1 of Uncinocarpus reesii (strain UAMH 1704).